Here is a 2472-residue protein sequence, read N- to C-terminus: Spectrin alpha chain, non-erythrocytic 1 (2472 aa).

Residue methionine 1 is modified to N-acetylmethionine. Spectrin repeat units follow at residues 45-146, 150-251, 256-358, 361-465, 468-570, 574-676, 679-781, 785-888, and 891-969; these read RFQF…IKLL, KLVQ…QGKL, EVQR…ARLN, YRLQ…QYEQ, DLQL…AQLA, HLQQ…KLRE, QQQQ…QKLA, RLQQ…DLED, and QAQQ…ETGK. Phosphoserine is present on serine 587. Lysine 637 bears the N6-acetyllysine mark. Lysine 803 carries the post-translational modification N6-acetyllysine. Serine 924, serine 982, serine 999, serine 1029, serine 1031, and serine 1041 each carry phosphoserine. Residues 967–1026 form the SH3 domain; the sequence is TGKELVLALYDYQEKSPREVTMKKGDILTLLNSTNKDWWKVEVNDRQGFVPAAYVKKLDP. One copy of the Spectrin 10 repeat lies at 1096-1166; it reads LFREANELQQ…LESEGLMAEE (71 aa). Tyrosine 1176 carries the phosphotyrosine modification. A phosphoserine mark is found at serine 1190, serine 1207, serine 1217, serine 1291, serine 1306, serine 1323, and serine 1338. The stretch at 1233 to 1336 is one Spectrin 11 repeat; it reads HEVQRFHRDA…RADQRKAKLG (104 aa). 2 Spectrin repeats span residues 1339–1442 and 1446–1549; these read HDLQ…MMLD and ELQL…KLGE. Lysine 1519 bears the N6-acetyllysine mark. Phosphoserine occurs at positions 1550, 1557, 1578, 1615, and 1647. Spectrin repeat units follow at residues 1552–1656, 1659–1762, 1764–1868, 1871–1974, 1978–2081, 2092–2194, and 2206–2310; these read TLQQ…KLKE, KQQN…KLNE, HRLH…RLEE, EYQQ…KLDE, FLQF…KLLE, LFLT…LELQ, and LRQE…NLEQ. Threonine 2020 bears the Phosphothreonine mark. Lysine 2052 bears the N6-acetyllysine mark. EF-hand domains are found at residues 2323–2358, 2366–2401, and 2404–2439; these read EALK…LGYD, EPDP…RETE, and KSSE…EQAD. Ca(2+)-binding residues include aspartate 2336, aspartate 2338, serine 2340, arginine 2342, glutamate 2347, aspartate 2379, asparagine 2381, aspartate 2383, histidine 2385, and glutamate 2390. Lysine 2421 is modified (N6-acetyllysine).

Belongs to the spectrin family. As to quaternary structure, like erythrocyte spectrin, the spectrin-like proteins are capable of forming dimers which can further associate to tetramers. Interacts (via C-terminal spectrin repeats) with TRPC4. Interacts with CALM and EMD. Interacts with isoform 1 of ACP1. Identified in a complex with ACTN4, CASK, IQGAP1, MAGI2, NPHS1 and SPTBN1. Interacts with SHANK3 (via ANK repeats). Interacts with CLN3; this interaction regulates the fodrin localization at the plasma membrane. Post-translationally, phosphorylation of Tyr-1176 decreases sensitivity to cleavage by calpain in vitro.

It is found in the cytoplasm. The protein resides in the cytoskeleton. The protein localises to the cell cortex. In terms of biological role, fodrin, which seems to be involved in secretion, interacts with calmodulin in a calcium-dependent manner and is thus candidate for the calcium-dependent movement of the cytoskeleton at the membrane. In Homo sapiens (Human), this protein is Spectrin alpha chain, non-erythrocytic 1 (SPTAN1).